The chain runs to 424 residues: Histidine--tRNA ligase (424 aa).

Belongs to the class-II aminoacyl-tRNA synthetase family. Homodimer.

Its subcellular location is the cytoplasm. It catalyses the reaction tRNA(His) + L-histidine + ATP = L-histidyl-tRNA(His) + AMP + diphosphate + H(+). The protein is Histidine--tRNA ligase of Shewanella sediminis (strain HAW-EB3).